The primary structure comprises 297 residues: Malonyl-[acyl-carrier protein] O-methyltransferase (297 aa).

Belongs to the methyltransferase superfamily.

The enzyme catalyses malonyl-[ACP] + S-adenosyl-L-methionine = malonyl-[ACP] methyl ester + S-adenosyl-L-homocysteine. It functions in the pathway cofactor biosynthesis; biotin biosynthesis. In terms of biological role, converts the free carboxyl group of a malonyl-thioester to its methyl ester by transfer of a methyl group from S-adenosyl-L-methionine (SAM). It allows to synthesize pimeloyl-ACP via the fatty acid synthetic pathway. This chain is Malonyl-[acyl-carrier protein] O-methyltransferase, found in Laribacter hongkongensis (strain HLHK9).